We begin with the raw amino-acid sequence, 284 residues long: Protein phosphatase 1 regulatory subunit 3B (284 aa).

The PP1-binding motif signature appears at 61–64 (RVSF). One can recognise a CBM21 domain in the interval 124–232 (RNRLQTDHVC…SNKGKNYRII (109 aa)). Ser-260 is subject to Phosphoserine.

Interacts with glycogen, PPP1CC catalytic subunit of PP1 and PYGL. Associates with glycogen particles. Forms complexes with debranching enzyme, glycogen phosphorylase, glycogen synthase and phosphorylase kinase which is necessary for its regulation of PP1 activity.

Functionally, acts as a glycogen-targeting subunit for phosphatase PP1. Facilitates interaction of the PP1 with enzymes of the glycogen metabolism and regulates its activity. Suppresses the rate at which PP1 dephosphorylates (inactivates) glycogen phosphorylase and enhances the rate at which it activates glycogen synthase and therefore limits glycogen breakdown. Its activity is inhibited by PYGL, resulting in inhibition of the glycogen synthase and glycogen phosphorylase phosphatase activities of PP1. Dramatically increases basal and insulin-stimulated glycogen synthesis upon overexpression in hepatocytes. This chain is Protein phosphatase 1 regulatory subunit 3B (PPP1R3B), found in Bos taurus (Bovine).